The sequence spans 554 residues: 3-(3-hydroxy-phenyl)propionate/3-hydroxycinnamic acid hydroxylase (554 aa).

Residues 17 to 46 and 285 to 295 each bind FAD; these read QVAI…VVEK and FRIDRVLLAGD.

Belongs to the PheA/TfdB FAD monooxygenase family. FAD is required as a cofactor.

It carries out the reaction 3-(3-hydroxyphenyl)propanoate + NADH + O2 + H(+) = 3-(2,3-dihydroxyphenyl)propanoate + NAD(+) + H2O. The enzyme catalyses (2E)-3-(3-hydroxyphenyl)prop-2-enoate + NADH + O2 + H(+) = (2E)-3-(2,3-dihydroxyphenyl)prop-2-enoate + NAD(+) + H2O. It functions in the pathway aromatic compound metabolism; 3-phenylpropanoate degradation. Catalyzes the insertion of one atom of molecular oxygen into position 2 of the phenyl ring of 3-(3-hydroxyphenyl)propionate (3-HPP) and hydroxycinnamic acid (3HCI). This chain is 3-(3-hydroxy-phenyl)propionate/3-hydroxycinnamic acid hydroxylase, found in Escherichia coli O157:H7.